Here is a 213-residue protein sequence, read N- to C-terminus: Pyrrolidone-carboxylate peptidase (213 aa).

Active-site residues include E78, C141, and H165.

It belongs to the peptidase C15 family. In terms of assembly, homotetramer.

Its subcellular location is the cytoplasm. It carries out the reaction Release of an N-terminal pyroglutamyl group from a polypeptide, the second amino acid generally not being Pro.. Functionally, removes 5-oxoproline from various penultimate amino acid residues except L-proline. This is Pyrrolidone-carboxylate peptidase from Clostridium perfringens (strain ATCC 13124 / DSM 756 / JCM 1290 / NCIMB 6125 / NCTC 8237 / Type A).